Here is a 255-residue protein sequence, read N- to C-terminus: ATP synthase subunit a (255 aa).

The propeptide at 1–7 (MMFNNII) is removed in mature form. 6 helical membrane-spanning segments follow: residues 35–55 (FGFY…LITY), 91–111 (YFPF…LGLI), 120–140 (HFIL…ILGF), 147–167 (FFSL…LVLI), 177–197 (VSLG…LVIL), and 208–228 (GIFY…FSGL).

Belongs to the ATPase A chain family. F-type ATPases have 2 components, CF(1) - the catalytic core - and CF(0) - the membrane proton channel. CF(1) has five subunits: alpha(3), beta(3), gamma(1), delta(1), epsilon(1). CF(0) has three main subunits: a, b and c.

It is found in the mitochondrion inner membrane. Mitochondrial membrane ATP synthase (F(1)F(0) ATP synthase or Complex V) produces ATP from ADP in the presence of a proton gradient across the membrane which is generated by electron transport complexes of the respiratory chain. F-type ATPases consist of two structural domains, F(1) - containing the extramembraneous catalytic core and F(0) - containing the membrane proton channel, linked together by a central stalk and a peripheral stalk. During catalysis, ATP synthesis in the catalytic domain of F(1) is coupled via a rotary mechanism of the central stalk subunits to proton translocation. Key component of the proton channel; it may play a direct role in the translocation of protons across the membrane. The sequence is that of ATP synthase subunit a (ATP6) from Trichophyton rubrum (Athlete's foot fungus).